Here is a 575-residue protein sequence, read N- to C-terminus: G protein-coupled receptor kinase 4 (575 aa).

Methionine 1 carries the post-translational modification N-acetylmethionine. The interval 1–153 (MELENFMANT…DCAGVIYKYL (153 aa)) is N-terminal. An RGS domain is found at 51 to 171 (DFSSLCDQQP…QESTYYNRFL (121 aa)). In terms of domain architecture, Protein kinase spans 186–448 (FRQYRVLGKG…ASAVKQHPIF (263 aa)). ATP contacts are provided by residues 192–200 (LGKGGFGEV) and lysine 215. The active-site Proton acceptor is the aspartate 311. The region spanning 449-514 (KDINFSRLEA…GCVTIPWQNE (66 aa)) is the AGC-kinase C-terminal domain. Serine 484 bears the Phosphoserine mark.

The protein belongs to the protein kinase superfamily. AGC Ser/Thr protein kinase family. GPRK subfamily. As to quaternary structure, interacts with DRD3. Palmitoylated. As to expression, isoform GRK4A is expressed in testis. Isoform GRK4B is heterogeneously distributed in the kidney, with 20-fold enrichment in the outer medulla. Has a widespread but low level of expression in tissues other than testis.

Its subcellular location is the cytoplasm. The protein localises to the cell cortex. It catalyses the reaction [G-protein-coupled receptor] + ATP = [G-protein-coupled receptor]-phosphate + ADP + H(+). Its activity is regulated as follows. Inhibited by heparin. In terms of biological role, specifically phosphorylates the activated forms of G protein-coupled receptors. Plays an important role in the regulation of renal sodium handling and blood pressure. The sequence is that of G protein-coupled receptor kinase 4 (Grk4) from Rattus norvegicus (Rat).